Consider the following 392-residue polypeptide: Bifunctional enzyme Fae/Hps (392 aa).

The interval 1-161 (MFQIGEALMG…EESNKSTHAI (161 aa)) is formaldehyde-activating enzyme. The active-site Proton donor is His-17. Residues Asp-19, Leu-48, Lys-66, Thr-68, and Gln-83 each coordinate substrate. The 3-hexulose-6-phosphate synthase stretch occupies residues 162–392 (MGFKVTRLWD…IDQFRVMTDF (231 aa)).

In the N-terminal section; belongs to the formaldehyde-activating enzyme family. It in the C-terminal section; belongs to the HPS/KGPDC family. HPS subfamily.

It catalyses the reaction 5,6,7,8-tetrahydromethanopterin + formaldehyde = 5,10-methylenetetrahydromethanopterin + H2O. The enzyme catalyses D-ribulose 5-phosphate + formaldehyde = D-arabino-hex-3-ulose 6-phosphate. The protein operates within carbohydrate biosynthesis; D-ribose 5-phosphate biosynthesis. Its function is as follows. Catalyzes the condensation of formaldehyde with tetrahydromethanopterin (H(4)MPT) to 5,10-methylenetetrahydromethanopterin. In terms of biological role, catalyzes the reversible formation of ribulose-5-phosphate and formaldehyde from 3-hexulose-6-phosphate. The chain is Bifunctional enzyme Fae/Hps from Methanosarcina mazei (strain ATCC BAA-159 / DSM 3647 / Goe1 / Go1 / JCM 11833 / OCM 88) (Methanosarcina frisia).